Consider the following 389-residue polypeptide: Cobalt-precorrin-5B C(1)-methyltransferase (389 aa).

The disordered stretch occupies residues 1–25; sequence MESRADHAVPADEGHGATEPPRGRD.

Belongs to the CbiD family.

It catalyses the reaction Co-precorrin-5B + S-adenosyl-L-methionine = Co-precorrin-6A + S-adenosyl-L-homocysteine. It functions in the pathway cofactor biosynthesis; adenosylcobalamin biosynthesis; cob(II)yrinate a,c-diamide from sirohydrochlorin (anaerobic route): step 6/10. Catalyzes the methylation of C-1 in cobalt-precorrin-5B to form cobalt-precorrin-6A. In Nitratidesulfovibrio vulgaris (strain ATCC 29579 / DSM 644 / CCUG 34227 / NCIMB 8303 / VKM B-1760 / Hildenborough) (Desulfovibrio vulgaris), this protein is Cobalt-precorrin-5B C(1)-methyltransferase.